A 395-amino-acid polypeptide reads, in one-letter code: Acetate kinase (395 aa).

Asparagine 8 is a Mg(2+) binding site. ATP is bound at residue lysine 15. Arginine 90 serves as a coordination point for substrate. Residue aspartate 147 is the Proton donor/acceptor of the active site. Residues 207–211 (HLGNG), 284–286 (DMR), and 330–334 (GIGEN) contribute to the ATP site. Glutamate 383 is a Mg(2+) binding site.

This sequence belongs to the acetokinase family. In terms of assembly, homodimer. The cofactor is Mg(2+). Mn(2+) is required as a cofactor.

It localises to the cytoplasm. It catalyses the reaction acetate + ATP = acetyl phosphate + ADP. It functions in the pathway metabolic intermediate biosynthesis; acetyl-CoA biosynthesis; acetyl-CoA from acetate: step 1/2. Catalyzes the formation of acetyl phosphate from acetate and ATP. Can also catalyze the reverse reaction. The sequence is that of Acetate kinase from Enterococcus faecalis (strain ATCC 700802 / V583).